A 273-amino-acid polypeptide reads, in one-letter code: tRNA pseudouridine synthase B (273 aa).

The active-site Nucleophile is the Asp-38.

The protein belongs to the pseudouridine synthase TruB family. Type 1 subfamily.

It catalyses the reaction uridine(55) in tRNA = pseudouridine(55) in tRNA. Responsible for synthesis of pseudouridine from uracil-55 in the psi GC loop of transfer RNAs. The sequence is that of tRNA pseudouridine synthase B from Campylobacter concisus (strain 13826).